We begin with the raw amino-acid sequence, 59 residues long: KappaPI-actitoxin-Avd3d (59 aa).

Positions 5–55 (CELPKVVGRCRARFPRYYYNLSSRRCEKFIYGGCGGNANNFHTLEECEKVC) constitute a BPTI/Kunitz inhibitor domain. 3 cysteine pairs are disulfide-bonded: Cys5/Cys55, Cys14/Cys38, and Cys30/Cys51.

Belongs to the venom Kunitz-type family. Sea anemone type 2 potassium channel toxin subfamily.

The protein resides in the secreted. It localises to the nematocyst. Dual-function toxin that inhibits both the serine protease trypsin (Kd&lt;30 nM) and voltage-gated potassium channels Kv1.2/KCNA2 (IC(50)=1300 nM). The protein is KappaPI-actitoxin-Avd3d of Anemonia sulcata (Mediterranean snakelocks sea anemone).